The chain runs to 1429 residues: DNA-directed RNA polymerase subunit beta' (1429 aa).

4 residues coordinate Zn(2+): Cys68, Cys70, Cys83, and Cys86. Residues Asp459, Asp461, and Asp463 each coordinate Mg(2+). Residues Cys805, Cys879, Cys886, and Cys889 each coordinate Zn(2+). Positions 1407–1429 are disordered; that stretch reads ESFPLLGGDGEPASTTSSTTEGE. The segment covering 1419–1429 has biased composition (polar residues); sequence ASTTSSTTEGE.

This sequence belongs to the RNA polymerase beta' chain family. As to quaternary structure, the RNAP catalytic core consists of 2 alpha, 1 beta, 1 beta' and 1 omega subunit. When a sigma factor is associated with the core the holoenzyme is formed, which can initiate transcription. Mg(2+) serves as cofactor. Zn(2+) is required as a cofactor.

It carries out the reaction RNA(n) + a ribonucleoside 5'-triphosphate = RNA(n+1) + diphosphate. Functionally, DNA-dependent RNA polymerase catalyzes the transcription of DNA into RNA using the four ribonucleoside triphosphates as substrates. The chain is DNA-directed RNA polymerase subunit beta' from Rhodopirellula baltica (strain DSM 10527 / NCIMB 13988 / SH1).